Consider the following 893-residue polypeptide: Beta-adaptin-like protein C (893 aa).

A disordered region spans residues 593 to 621 (TEDEDYVEGSETGYPEASGNPVDGAASPS).

This sequence belongs to the adaptor complexes large subunit family. As to quaternary structure, adaptor protein complexes are heterotetramers composed of two large adaptins (beta-type subunit and alpha-type or delta-type or epsilon-type or gamma-type subunit), a medium adaptin (mu-type subunit) and a small adaptin (sigma-type subunit).

It is found in the golgi apparatus. It localises to the trans-Golgi network. Its subcellular location is the cytoplasmic vesicle. The protein resides in the clathrin-coated vesicle membrane. Subunit of clathrin-associated adaptor protein complex that plays a role in protein sorting in the late-Golgi/trans-Golgi network (TGN) and/or endosomes. The AP complexes mediate both the recruitment of clathrin to membranes and the recognition of sorting signals within the cytosolic tails of transmembrane cargo molecules. This chain is Beta-adaptin-like protein C (BETAC-AD), found in Arabidopsis thaliana (Mouse-ear cress).